A 244-amino-acid chain; its full sequence is Protein pendolino (244 aa).

The UBC core domain maps to 20–176 (QQEYKILAEY…VQENIKESKE (157 aa)).

Belongs to the ubiquitin-conjugating enzyme family. FTS subfamily. As to quaternary structure, interacts (via N-terminus) with cav/HOAP (via N-terminus); the interaction is direct. Probably interacts (via N-terminus and UBC domain) with ver and moi.

Its subcellular location is the nucleus. It is found in the nucleolus. It localises to the chromosome. Required for efficient DNA replication, probably through involvement in telomere replication. May have a role in telomere capping of heterochromatic chromosome ends. The polypeptide is Protein pendolino (Drosophila melanogaster (Fruit fly)).